A 544-amino-acid chain; its full sequence is CTP synthase (544 aa).

Residues methionine 1–isoleucine 266 form an amidoligase domain region. Serine 13 is a binding site for CTP. Serine 13 contributes to the UTP binding site. ATP contacts are provided by residues serine 14–isoleucine 19 and aspartate 71. Mg(2+) contacts are provided by aspartate 71 and glutamate 140. CTP is bound by residues aspartate 147–glutamate 149, lysine 187–glutamine 192, and lysine 223. Residues lysine 187–glutamine 192 and lysine 223 contribute to the UTP site. ATP is bound at residue arginine 239–valine 241. One can recognise a Glutamine amidotransferase type-1 domain in the interval threonine 292–leucine 543. Glycine 355 is an L-glutamine binding site. The active-site Nucleophile; for glutamine hydrolysis is cysteine 382. Residues tyrosine 383–glutamine 386, glutamate 406, and arginine 471 each bind L-glutamine. Catalysis depends on residues histidine 516 and glutamate 518.

This sequence belongs to the CTP synthase family. In terms of assembly, homotetramer.

The catalysed reaction is UTP + L-glutamine + ATP + H2O = CTP + L-glutamate + ADP + phosphate + 2 H(+). It catalyses the reaction L-glutamine + H2O = L-glutamate + NH4(+). It carries out the reaction UTP + NH4(+) + ATP = CTP + ADP + phosphate + 2 H(+). Its pathway is pyrimidine metabolism; CTP biosynthesis via de novo pathway; CTP from UDP: step 2/2. With respect to regulation, allosterically activated by GTP, when glutamine is the substrate; GTP has no effect on the reaction when ammonia is the substrate. The allosteric effector GTP functions by stabilizing the protein conformation that binds the tetrahedral intermediate(s) formed during glutamine hydrolysis. Inhibited by the product CTP, via allosteric rather than competitive inhibition. Functionally, catalyzes the ATP-dependent amination of UTP to CTP with either L-glutamine or ammonia as the source of nitrogen. Regulates intracellular CTP levels through interactions with the four ribonucleotide triphosphates. The sequence is that of CTP synthase from Hyphomonas neptunium (strain ATCC 15444).